Reading from the N-terminus, the 423-residue chain is Serine hydroxymethyltransferase (423 aa).

(6S)-5,6,7,8-tetrahydrofolate is bound by residues Leu-126 and 130 to 132 (GHL). Lys-235 is subject to N6-(pyridoxal phosphate)lysine.

Belongs to the SHMT family. In terms of assembly, homodimer. The cofactor is pyridoxal 5'-phosphate.

It localises to the cytoplasm. It catalyses the reaction (6R)-5,10-methylene-5,6,7,8-tetrahydrofolate + glycine + H2O = (6S)-5,6,7,8-tetrahydrofolate + L-serine. Its pathway is one-carbon metabolism; tetrahydrofolate interconversion. It functions in the pathway amino-acid biosynthesis; glycine biosynthesis; glycine from L-serine: step 1/1. Its function is as follows. Catalyzes the reversible interconversion of serine and glycine with tetrahydrofolate (THF) serving as the one-carbon carrier. This reaction serves as the major source of one-carbon groups required for the biosynthesis of purines, thymidylate, methionine, and other important biomolecules. Also exhibits THF-independent aldolase activity toward beta-hydroxyamino acids, producing glycine and aldehydes, via a retro-aldol mechanism. The sequence is that of Serine hydroxymethyltransferase from Sorangium cellulosum (strain So ce56) (Polyangium cellulosum (strain So ce56)).